Reading from the N-terminus, the 322-residue chain is Cytochrome c biogenesis protein CcsA (322 aa).

The next 8 membrane-spanning stretches (helical) occupy residues phenylalanine 15–isoleucine 35, glycine 45–glycine 65, leucine 72–phenylalanine 92, tyrosine 98–threonine 120, methionine 144–isoleucine 164, glycine 226–asparagine 246, tryptophan 253–leucine 273, and alanine 287–leucine 307.

The protein belongs to the CcmF/CycK/Ccl1/NrfE/CcsA family. As to quaternary structure, may interact with Ccs1.

Its subcellular location is the plastid. The protein localises to the chloroplast thylakoid membrane. In terms of biological role, required during biogenesis of c-type cytochromes (cytochrome c6 and cytochrome f) at the step of heme attachment. The chain is Cytochrome c biogenesis protein CcsA from Coffea arabica (Arabian coffee).